The primary structure comprises 234 residues: Ribose-5-phosphate isomerase A (234 aa).

Substrate is bound by residues 35 to 38 (SGTT), 91 to 94 (DGAD), and 105 to 108 (KGGG). The active-site Proton acceptor is the Glu114. Residue Lys132 participates in substrate binding.

The protein belongs to the ribose 5-phosphate isomerase family. As to quaternary structure, homodimer.

It carries out the reaction aldehydo-D-ribose 5-phosphate = D-ribulose 5-phosphate. The protein operates within carbohydrate degradation; pentose phosphate pathway; D-ribose 5-phosphate from D-ribulose 5-phosphate (non-oxidative stage): step 1/1. Catalyzes the reversible conversion of ribose-5-phosphate to ribulose 5-phosphate. The polypeptide is Ribose-5-phosphate isomerase A (Methanococcus aeolicus (strain ATCC BAA-1280 / DSM 17508 / OCM 812 / Nankai-3)).